A 383-amino-acid polypeptide reads, in one-letter code: tRNA-specific 2-thiouridylase MnmA (383 aa).

ATP contacts are provided by residues 9–16 (GMSGGVDS) and Met35. The interval 95–97 (NPD) is interaction with target base in tRNA. The Nucleophile role is filled by Cys100. A disulfide bond links Cys100 and Cys196. Gly124 is an ATP binding site. Residues 146-148 (KDQ) form an interaction with tRNA region. The active-site Cysteine persulfide intermediate is Cys196. Positions 308-309 (RY) are interaction with tRNA.

The protein belongs to the MnmA/TRMU family.

Its subcellular location is the cytoplasm. The catalysed reaction is S-sulfanyl-L-cysteinyl-[protein] + uridine(34) in tRNA + AH2 + ATP = 2-thiouridine(34) in tRNA + L-cysteinyl-[protein] + A + AMP + diphosphate + H(+). Catalyzes the 2-thiolation of uridine at the wobble position (U34) of tRNA, leading to the formation of s(2)U34. This is tRNA-specific 2-thiouridylase MnmA from Burkholderia pseudomallei (strain 668).